Reading from the N-terminus, the 67-residue chain is Transcription elongation factor Spt4 (67 aa).

Residues C7, C10, C19, and C22 each contribute to the Zn(2+) site.

It belongs to the archaeal Spt4 family. In terms of assembly, heterodimer composed of Spt4 and Spt5. Interacts with RNA polymerase (RNAP). The complex interacts with FttA.

Its subcellular location is the chromosome. In terms of biological role, the Stp4-Spt5 complex stimulates transcription elongation on both naked DNA and histone-bound DNA (chromatin), facilitating transcription through the histone barrier. Neither protein functions alone. The complex also stimulates the transcription termination activity of FttA, neither protein alone stimulates FttA-dependent termination. This Thermococcus kodakarensis (strain ATCC BAA-918 / JCM 12380 / KOD1) (Pyrococcus kodakaraensis (strain KOD1)) protein is Transcription elongation factor Spt4.